A 149-amino-acid polypeptide reads, in one-letter code: Large ribosomal subunit protein uL13 (149 aa).

The protein belongs to the universal ribosomal protein uL13 family. As to quaternary structure, part of the 50S ribosomal subunit.

This protein is one of the early assembly proteins of the 50S ribosomal subunit, although it is not seen to bind rRNA by itself. It is important during the early stages of 50S assembly. The chain is Large ribosomal subunit protein uL13 from Chlorobium chlorochromatii (strain CaD3).